The primary structure comprises 498 residues: GPI mannosyltransferase 4 (498 aa).

The chain crosses the membrane as a helical span at residues phenylalanine 11–proline 31. A glycan (N-linked (GlcNAc...) asparagine) is linked at asparagine 47. Residues serine 63–leucine 83 form a helical membrane-spanning segment. Residue asparagine 84 is glycosylated (N-linked (GlcNAc...) asparagine). A run of 9 helical transmembrane segments spans residues leucine 96–serine 116, leucine 140–leucine 160, leucine 189–methionine 209, leucine 222–glycine 242, valine 247–tyrosine 267, tyrosine 282–valine 302, threonine 310–leucine 330, phenylalanine 332–leucine 348, and tryptophan 350–methionine 370. 2 N-linked (GlcNAc...) asparagine glycosylation sites follow: asparagine 408 and asparagine 473.

The protein belongs to the glycosyltransferase 22 family. PIGZ subfamily.

The protein resides in the endoplasmic reticulum membrane. It functions in the pathway glycolipid biosynthesis; glycosylphosphatidylinositol-anchor biosynthesis. Alpha-1,2-mannosyltransferase involved in glycosylphosphatidylinositol-anchor biosynthesis. Transfers a fourth mannose to trimannosyl-GPIs during GPI precursor assembly. The presence of a fourth mannose in GPI is essential in fungi. This Candida albicans (strain SC5314 / ATCC MYA-2876) (Yeast) protein is GPI mannosyltransferase 4 (SMP3).